The sequence spans 190 residues: Endoribonuclease YbeY (190 aa).

Residues His-147, His-151, and His-157 each contribute to the Zn(2+) site.

The protein belongs to the endoribonuclease YbeY family. The cofactor is Zn(2+).

The protein resides in the cytoplasm. Single strand-specific metallo-endoribonuclease involved in late-stage 70S ribosome quality control and in maturation of the 3' terminus of the 16S rRNA. The polypeptide is Endoribonuclease YbeY (Nitrobacter winogradskyi (strain ATCC 25391 / DSM 10237 / CIP 104748 / NCIMB 11846 / Nb-255)).